A 269-amino-acid polypeptide reads, in one-letter code: Ethylene-responsive transcription factor ERN1 (269 aa).

Residues 1–15 show a composition bias toward polar residues; the sequence is MEIQFQQPNLQQHQK. Disordered stretches follow at residues 1-36 and 128-157; these read MEIQFQQPNLQQHQKAGTKGGKFKGRNRNSNTNKFV and DVPAPSASTTSTSSNTSNSDKNDHNSLSSG. Positions 34 to 91 form a DNA-binding region, AP2/ERF; sequence KFVGVRQRPSGRWVAEIKDTTQKIRMWLGTFETAEEAARAYDEAACLLRGSNTRTNFI. Over residues 128–146 the composition is skewed to low complexity; sequence DVPAPSASTTSTSSNTSNS.

Belongs to the AP2/ERF transcription factor family. ERF subfamily.

It localises to the nucleus. Transcription factor involved in the symbiotic nodule signaling pathway in response to rhizobial stimulation. Functions as a transcriptional regulator required for root infection by symbiotic rhizobia, infection thread (IT) formation, and nodule development. May coordinate these processes. Functions downstream of the CCAMK-CYCLOPS complex. Probably not involved in arbuscular mycorrhizal (AM) symbiosis. This Lotus japonicus (Lotus corniculatus var. japonicus) protein is Ethylene-responsive transcription factor ERN1.